Here is a 268-residue protein sequence, read N- to C-terminus: Probable RNA methyltransferase C2A9.10 (268 aa).

One can recognise a Bin3-type SAM domain in the interval 23 to 258 (DPRLKCLPDS…RTMYIYKKKG (236 aa)).

It belongs to the methyltransferase superfamily.

In terms of biological role, probable RNA methyltransferase. The chain is Probable RNA methyltransferase C2A9.10 from Schizosaccharomyces pombe (strain 972 / ATCC 24843) (Fission yeast).